The chain runs to 3095 residues: Centrosome-associated protein 350 (3095 aa).

Disordered stretches follow at residues 1 to 24 (MRSS…ETIQ) and 63 to 105 (TKKS…RSPL). Residues 14 to 24 (PRNSQSKETIQ) are compositionally biased toward polar residues. Phosphoserine is present on residues Ser-84 and Ser-140. Disordered regions lie at residues 219-239 (DEMP…LNNM), 251-272 (SDSS…KRQQ), and 430-493 (KILG…RAWS). Polar residues predominate over residues 228–238 (SENNSKPSLNN). Residues 251–265 (SDSSPSSSACNSQRS) show a composition bias toward low complexity. Composition is skewed to basic and acidic residues over residues 438-457 (MEQK…ERVA) and 464-476 (GRAE…DVSH). The residue at position 468 (Ser-468) is a Phosphoserine. Residues 481-491 (RSSARSRSSRA) show a composition bias toward low complexity. At Ser-503 the chain carries Phosphoserine. 2 disordered regions span residues 538 to 623 (QAVR…QKNK) and 671 to 718 (ARQH…PPQP). Basic and acidic residues-rich tracts occupy residues 587 to 623 (YDTD…QKNK) and 690 to 699 (ESDKENKIQE). A coiled-coil region spans residues 596-641 (IVRQQEERRRRQHEEKKAQKEATEQKNKRLQELYRRQREAFSKAKT). Position 691 is a phosphoserine (Ser-691). Over residues 701 to 714 (PPSASSSSDLSLSE) the composition is skewed to low complexity. Ser-874 and Ser-935 each carry phosphoserine. Residues 977–996 (SVSEGPLLSEGSLSEEEERR) form a disordered region. Residues 979–988 (SEGPLLSEGS) are compositionally biased toward low complexity. A Phosphoserine modification is found at Ser-1057. Disordered stretches follow at residues 1099-1128 (YEDD…GSSL) and 1151-1265 (QHSS…SQKL). Positions 1119–1128 (LESQVDGSSL) are enriched in polar residues. Residues 1153-1168 (SSGARSAGSTRSSSAS) show a composition bias toward low complexity. Over residues 1194-1206 (DEEKVQSDSERGS) the composition is skewed to basic and acidic residues. Phosphoserine is present on Ser-1200. The segment covering 1251–1265 (QKTPTSPLSPSSQKL) has biased composition (low complexity). Thr-1253 carries the phosphothreonine modification. 2 positions are modified to phosphoserine: Ser-1256 and Ser-1259. A coiled-coil region spans residues 1363-1402 (IKAQQQRHERDLALLKLKAEQEALECQRQLEETRNKTAQV). Disordered regions lie at residues 1490 to 1668 (AETD…GQDS), 1720 to 1739 (LRDK…QRGL), 1787 to 1864 (KLKS…QRRQ), and 1893 to 2017 (AWDK…PVKS). Positions 1503–1513 (QSKEGAVDSKR) are enriched in basic and acidic residues. 2 stretches are compositionally biased toward low complexity: residues 1517–1526 (SPSRDSYSES) and 1536–1545 (SSGSSRQDSP). Residues 1551–1564 (KENEKPFHGEKMES) show a composition bias toward basic and acidic residues. Ser-1606 bears the Phosphoserine mark. Positions 1624 to 1640 (ESHRRFNMEKKRGHHDD) are enriched in basic and acidic residues. A phosphoserine mark is found at Ser-1641 and Ser-1646. Positions 1700 to 1793 (KALKEKTKAE…LQEKLKSAGE (94 aa)) form a coiled coil. Over residues 1787–1796 (KLKSAGEKKL) the composition is skewed to basic and acidic residues. Ser-1812 carries the post-translational modification Phosphoserine. The span at 1819–1835 (ETRSPSPISISSSETSS) shows a compositional bias: low complexity. 2 stretches are compositionally biased toward basic and acidic residues: residues 1845–1864 (SRMD…QRRQ) and 1894–1915 (WDKE…RTEQ). A coiled-coil region spans residues 1850–1893 (KFLTKREQKLMQRRQHAEELLEWKRRLDAEEAEIQQMEKQALAA). Ser-1930 carries the post-translational modification Phosphoserine. Over residues 1980 to 1994 (STSPSKHSPPKSCLS) the composition is skewed to low complexity. Residues 1999–2011 (ESSKASHRTEGHC) show a composition bias toward basic and acidic residues. Residues 2043–2092 (IEGRIRALKDELRKRKSVVEQLKREQRKRQKERLKAQEASLLRQLETYDE) adopt a coiled-coil conformation. The residue at position 2108 (Ser-2108) is a Phosphoserine. 4 disordered regions span residues 2116–2155 (KTLS…GSLA), 2191–2265 (IEHL…VEDA), 2286–2427 (LSSK…EISE), and 2440–2471 (VHSE…GGTE). The segment covering 2133 to 2151 (HRSETAKTWKSVTESERSR) has biased composition (basic and acidic residues). The residue at position 2198 (Ser-2198) is a Phosphoserine. 2 stretches are compositionally biased toward basic and acidic residues: residues 2202-2214 (SSRK…RDSL) and 2227-2259 (NAPD…KLES). Over residues 2286–2300 (LSSKELPSDSANVQQ) the composition is skewed to polar residues. Residues 2301 to 2331 (DLDKPATETSHEKEEALKEDQSNHSTDDRSP) are compositionally biased toward basic and acidic residues. Over residues 2349-2362 (DSTCSGQLSVPKES) the composition is skewed to polar residues. 2 stretches are compositionally biased toward basic and acidic residues: residues 2377 to 2387 (ISADEISKDDS) and 2395 to 2407 (LRKD…DRSQ). The segment covering 2409-2420 (TRSSRSRATGSG) has biased composition (low complexity). Ser-2421 and Ser-2450 each carry phosphoserine. Residues 2455-2465 (MKSKERSDVGH) are compositionally biased toward basic and acidic residues. The 43-residue stretch at 2504–2546 (GETDFAKGFWAGVELDKPEGNNNGTYDGIVYFVCKDKHGIFAP) folds into the CAP-Gly domain. At Thr-2671 the chain carries Phosphothreonine. Residues 2700-2731 (LLDLLTREKNQLEAQLKSSISEEKKSKQQLET) adopt a coiled-coil conformation. The interval 2767 to 2793 (QEFLDQKKVPPQDLPQNTEEQSPSVPS) is disordered. Residues 2780–2791 (LPQNTEEQSPSV) show a composition bias toward polar residues. A phosphoserine mark is found at Ser-2809 and Ser-2818.

In terms of assembly, part of a ternary complex that contains CEP350, CEP43 and MAPRE1. Interacts (via C-terminus) directly with CEP43 (via N-terminus). Interacts with NR1H3, PPARA, PPARD and PPARG. Interacts directly with microtubules. Interacts with the fusion protein CEP43-FGFR1, and by doing so recruits and activates PI3K and PLC-gamma. Interacts with CYLD. Interacts with CFAP157. Interacts with CEP19 (via C-terminus). Interacts with CEP78; promoting CEP78 localization to centrosome and centriole. Phosphorylated during mitosis.

The protein resides in the cytoplasm. The protein localises to the cytoskeleton. It is found in the microtubule organizing center. Its subcellular location is the centrosome. It localises to the spindle. The protein resides in the nucleus. The protein localises to the centriole. It is found in the cilium basal body. Its function is as follows. Plays an essential role in centriole growth by stabilizing a procentriolar seed composed of at least, SASS6 and CPAP. Required for anchoring microtubules to the centrosomes and for the integrity of the microtubule network. Recruits PPARA to discrete subcellular compartments and thereby modulates PPARA activity. Required for ciliation. This is Centrosome-associated protein 350 from Mus musculus (Mouse).